The sequence spans 271 residues: Expansin-B1 (271 aa).

A signal peptide spans 1–24 (MQLFPVILPTLCVFLHLLISGSGS). The Expansin-like EG45 domain occupies 58–169 (GGACGYGSLV…RRTACKYRGK (112 aa)). 3 disulfide bridges follow: Cys61–Cys90, Cys93–Cys164, and Cys98–Cys104. One can recognise an Expansin-like CBD domain in the interval 182 to 263 (YWLSLLIEYE…NWVPKATYTS (82 aa)). A glycan (N-linked (GlcNAc...) asparagine) is linked at Asn242.

The protein belongs to the expansin family. Expansin B subfamily.

It localises to the secreted. It is found in the cell wall. Its subcellular location is the membrane. Its function is as follows. May cause loosening and extension of plant cell walls by disrupting non-covalent bonding between cellulose microfibrils and matrix glucans. No enzymatic activity has been found. This chain is Expansin-B1 (EXPB1), found in Arabidopsis thaliana (Mouse-ear cress).